Reading from the N-terminus, the 313-residue chain is Formimidoylglutamase (313 aa).

Residues His-130, Asp-155, His-157, Asp-159, Asp-241, and Asp-243 each coordinate Mn(2+).

It belongs to the arginase family. Requires Mn(2+) as cofactor.

The enzyme catalyses N-formimidoyl-L-glutamate + H2O = formamide + L-glutamate. It participates in amino-acid degradation; L-histidine degradation into L-glutamate; L-glutamate from N-formimidoyl-L-glutamate (hydrolase route): step 1/1. Its function is as follows. Catalyzes the conversion of N-formimidoyl-L-glutamate to L-glutamate and formamide. The sequence is that of Formimidoylglutamase from Salmonella arizonae (strain ATCC BAA-731 / CDC346-86 / RSK2980).